We begin with the raw amino-acid sequence, 136 residues long: Protein LITTLE ZIPPER 1 (136 aa).

Positions 97 to 122 (ENQNIIRENEKLKKKALLLHQENKTL) form a coiled coil.

Interacts with REV. As to expression, expressed in the adaxial epidermis of the cotyledons and in the vascular cylinder of wild-type torpedo stage embryos.

In terms of biological role, competitive inhibitor of the HD-ZIPIII transcription factors in shoot apical meristem (SAM) development. Acts by forming non-functional heterodimers. Part of a negative feedback loop. Essential for proper functioning of stem cells in the SAM. The protein is Protein LITTLE ZIPPER 1 of Arabidopsis thaliana (Mouse-ear cress).